A 448-amino-acid polypeptide reads, in one-letter code: Phosphoglucosamine mutase (448 aa).

Ser-104 functions as the Phosphoserine intermediate in the catalytic mechanism. Positions 104, 243, 245, and 247 each coordinate Mg(2+). Residue Ser-104 is modified to Phosphoserine.

Belongs to the phosphohexose mutase family. Mg(2+) is required as a cofactor. Activated by phosphorylation.

The enzyme catalyses alpha-D-glucosamine 1-phosphate = D-glucosamine 6-phosphate. Functionally, catalyzes the conversion of glucosamine-6-phosphate to glucosamine-1-phosphate. The protein is Phosphoglucosamine mutase of Xylella fastidiosa (strain Temecula1 / ATCC 700964).